The chain runs to 327 residues: Phosphate acyltransferase (327 aa).

Belongs to the PlsX family. As to quaternary structure, homodimer. Probably interacts with PlsY.

The protein resides in the cytoplasm. The catalysed reaction is a fatty acyl-[ACP] + phosphate = an acyl phosphate + holo-[ACP]. The protein operates within lipid metabolism; phospholipid metabolism. Its function is as follows. Catalyzes the reversible formation of acyl-phosphate (acyl-PO(4)) from acyl-[acyl-carrier-protein] (acyl-ACP). This enzyme utilizes acyl-ACP as fatty acyl donor, but not acyl-CoA. The polypeptide is Phosphate acyltransferase (Thermosipho africanus (strain TCF52B)).